The following is a 204-amino-acid chain: Quinol oxidase subunit 3 (204 aa).

The next 6 helical transmembrane spans lie at 27–47, 66–86, 95–115, 118–138, 140–160, and 184–204; these read FWIF…TFFV, LVMI…IAVH, GVVI…GCEI, FVHY…SGFF, LLGT…GILI, and FLDV…LGGL.

Belongs to the cytochrome c oxidase subunit 3 family.

It is found in the cell membrane. The enzyme catalyses 2 a quinol + O2 = 2 a quinone + 2 H2O. Its function is as follows. Catalyzes quinol oxidation with the concomitant reduction of oxygen to water. Major component for energy conversion during vegetative growth. This is Quinol oxidase subunit 3 (qoxC) from Bacillus subtilis (strain 168).